The chain runs to 439 residues: Probable threonine protease PRSS50 (439 aa).

Disordered regions lie at residues 1–22 (MEPW…VPGA) and 48–130 (ERIR…TMAP). An N-terminal signal peptide occupies residues 1 to 47 (MEPWCGAEVRGQGPQGPRVPGASRSRSRALLLLLLLLLLLLPRRPAG). Positions 9-21 (VRGQGPQGPRVPG) are enriched in low complexity. At 48-415 (ERIRPRRPPR…WIWDRLSGEP (368 aa)) the chain is on the extracellular side. Residues 51 to 61 (RPRRPPRHAHP) show a composition bias toward basic residues. Positions 112–127 (QAQTNQTTTAPPNSQT) are enriched in low complexity. Residues N116 and N187 are each glycosylated (N-linked (GlcNAc...) asparagine). Residues 157–412 (FCGSSHEPDP…YRPWIWDRLS (256 aa)) form the Peptidase S1 domain. C192 and C208 form a disulfide bridge. H207 functions as the Charge relay system in the catalytic mechanism. A glycan (N-linked (GlcNAc...) asparagine) is linked at N226. Residue D260 is the Charge relay system of the active site. 3 disulfide bridges follow: C294/C370, C327/C350, and C360/C388. T364 acts as the Charge relay system in catalysis. A helical transmembrane segment spans residues 416–436 (LALPAPSRTLLLAFLLLLILL). Topologically, residues 437-439 (GTL) are cytoplasmic.

It belongs to the peptidase S1 family.

The protein resides in the membrane. Its function is as follows. May be involved in proteolysis through its threonine endopeptidase activity. This is Probable threonine protease PRSS50 (Prss50) from Mus musculus (Mouse).